We begin with the raw amino-acid sequence, 195 residues long: Cbp/p300-interacting transactivator 1 (195 aa).

2 disordered regions span residues 1-24 and 51-149; these read MPTMSRPALDVKGGTSPVKENANP and ASNG…SPAI. The span at 54–78 shows a compositional bias: low complexity; sequence GTKASGAPTSSSGSPSPISSSTATP. Polar residues predominate over residues 97–106; it reads MQLQKLNSQY. Residues 137-148 are compositionally biased toward low complexity; sequence SLSPSAGAQSPA. The short motif at 160–169 is the Nuclear export signal element; the sequence is LMSLVVELGL.

This sequence belongs to the CITED family. In terms of assembly, interacts (via C-terminus) with CREBBP. Interacts with EGR2. Homodimer. Binds to RBM14. Interacts (via N-terminus) with HSPA8; the interaction suppresses the association of CITED1 with p300/CBP and SMAD-mediated transcription transactivation. Interacts (via C-terminus) with TOX3 (via HGM box); the interaction increases estrogen-response element (ERE)-dependent transcription and protection against cell death. Interacts with ESR1; the interaction occurs in a estrogen-dependent manner. Interacts (unphosphorylated form preferentially and via C-terminus) with EP300. Post-translationally, phosphorylated. Phosphorylation changes in a cell cycle-dependent manner and reduces its transcriptional cofactor activity.

Its subcellular location is the nucleus. It is found in the cytoplasm. Transcriptional coactivator of the p300/CBP-mediated transcription complex. Enhances SMAD-mediated transcription by strengthening the functional link between the DNA-binding SMAD transcription factors and the p300/CBP transcription coactivator complex. Stimulates estrogen-dependent transactivation activity mediated by estrogen receptors signaling; stabilizes the interaction of estrogen receptor ESR1 and histone acetyltransferase EP300. Positively regulates TGF-beta signaling through its association with the SMAD/p300/CBP-mediated transcriptional coactivator complex. Induces transcription from estrogen-responsive promoters and protection against cell death. Potentiates EGR2-mediated transcriptional activation activity from the ERBB2 promoter. Acts as an inhibitor of osteoblastic mineralization through a cAMP-dependent parathyroid hormone receptor signaling. May play a role in pigmentation of melanocytes. Associates with chromatin to the estrogen-responsive TGF-alpha promoter region in a estrogen-dependent manner. In Bos taurus (Bovine), this protein is Cbp/p300-interacting transactivator 1 (CITED1).